Here is a 240-residue protein sequence, read N- to C-terminus: Small ribosomal subunit protein uS3 (240 aa).

Positions L21–Q92 constitute a KH type-2 domain. A phosphothreonine mark is found at T44 and T70. A Phosphoserine modification is found at S97. K106 participates in a covalent cross-link: Glycyl lysine isopeptide (Lys-Gly) (interchain with G-Cter in ubiquitin). S129 is subject to Phosphoserine. Residues K132 and K141 each participate in a glycyl lysine isopeptide (Lys-Gly) (interchain with G-Cter in ubiquitin) cross-link. R146 carries the post-translational modification Omega-N-methylarginine; by SFM1. Residues K151, K200, and K212 each participate in a glycyl lysine isopeptide (Lys-Gly) (interchain with G-Cter in ubiquitin) cross-link. The disordered stretch occupies residues K212 to A240. S221 carries the phosphoserine modification. The segment covering E230–A240 has biased composition (acidic residues). T231 bears the Phosphothreonine mark.

It belongs to the universal ribosomal protein uS3 family. Component of the small ribosomal subunit (SSU). Mature yeast ribosomes consist of a small (40S) and a large (60S) subunit. The 40S small subunit contains 1 molecule of ribosomal RNA (18S rRNA) and 33 different proteins (encoded by 57 genes). The large 60S subunit contains 3 rRNA molecules (25S, 5.8S and 5S rRNA) and 46 different proteins (encoded by 81 genes). Post-translationally, ubiquitinated at Lys-212 in response to stalled ribosomes. Ubiquitination leads to activation of the No-Go Decay (NGD) pathway and degradation of non-functional 18S rRNA: first monoubiquitinated at Lys-212 by MAG2, followed by formation of 'Lys-63'-linked polyubiquitin chains on monoubiquitin by HEL2 and RSP5.

It is found in the cytoplasm. Component of the ribosome, a large ribonucleoprotein complex responsible for the synthesis of proteins in the cell. The small ribosomal subunit (SSU) binds messenger RNAs (mRNAs) and translates the encoded message by selecting cognate aminoacyl-transfer RNA (tRNA) molecules. The large subunit (LSU) contains the ribosomal catalytic site termed the peptidyl transferase center (PTC), which catalyzes the formation of peptide bonds, thereby polymerizing the amino acids delivered by tRNAs into a polypeptide chain. The nascent polypeptides leave the ribosome through a tunnel in the LSU and interact with protein factors that function in enzymatic processing, targeting, and the membrane insertion of nascent chains at the exit of the ribosomal tunnel. The sequence is that of Small ribosomal subunit protein uS3 from Saccharomyces cerevisiae (strain ATCC 204508 / S288c) (Baker's yeast).